Reading from the N-terminus, the 183-residue chain is Peptidyl-prolyl cis-trans isomerase H (183 aa).

The region spanning 19–182 is the PPIase cyclophilin-type domain; sequence FFDVALGGEP…QDVVIIQCGE (164 aa).

Belongs to the cyclophilin-type PPIase family. PPIase H subfamily.

The protein resides in the nucleus. It carries out the reaction [protein]-peptidylproline (omega=180) = [protein]-peptidylproline (omega=0). Functionally, PPIases accelerate the folding of proteins. It catalyzes the cis-trans isomerization of proline imidic peptide bonds in oligopeptides. The sequence is that of Peptidyl-prolyl cis-trans isomerase H (cyp3) from Emericella nidulans (strain FGSC A4 / ATCC 38163 / CBS 112.46 / NRRL 194 / M139) (Aspergillus nidulans).